The sequence spans 204 residues: Leucyl/phenylalanyl-tRNA--protein transferase (204 aa).

It belongs to the L/F-transferase family.

The protein resides in the cytoplasm. The catalysed reaction is N-terminal L-lysyl-[protein] + L-leucyl-tRNA(Leu) = N-terminal L-leucyl-L-lysyl-[protein] + tRNA(Leu) + H(+). It catalyses the reaction N-terminal L-arginyl-[protein] + L-leucyl-tRNA(Leu) = N-terminal L-leucyl-L-arginyl-[protein] + tRNA(Leu) + H(+). The enzyme catalyses L-phenylalanyl-tRNA(Phe) + an N-terminal L-alpha-aminoacyl-[protein] = an N-terminal L-phenylalanyl-L-alpha-aminoacyl-[protein] + tRNA(Phe). Its function is as follows. Functions in the N-end rule pathway of protein degradation where it conjugates Leu, Phe and, less efficiently, Met from aminoacyl-tRNAs to the N-termini of proteins containing an N-terminal arginine or lysine. This is Leucyl/phenylalanyl-tRNA--protein transferase from Agrobacterium fabrum (strain C58 / ATCC 33970) (Agrobacterium tumefaciens (strain C58)).